The primary structure comprises 213 residues: Protein-L-isoaspartate O-methyltransferase (213 aa).

The active site involves serine 62.

Belongs to the methyltransferase superfamily. L-isoaspartyl/D-aspartyl protein methyltransferase family.

The protein resides in the cytoplasm. It carries out the reaction [protein]-L-isoaspartate + S-adenosyl-L-methionine = [protein]-L-isoaspartate alpha-methyl ester + S-adenosyl-L-homocysteine. Its function is as follows. Catalyzes the methyl esterification of L-isoaspartyl residues in peptides and proteins that result from spontaneous decomposition of normal L-aspartyl and L-asparaginyl residues. It plays a role in the repair and/or degradation of damaged proteins. The chain is Protein-L-isoaspartate O-methyltransferase from Idiomarina loihiensis (strain ATCC BAA-735 / DSM 15497 / L2-TR).